We begin with the raw amino-acid sequence, 474 residues long: Nucleobindin-1 (474 aa).

An N-terminal signal peptide occupies residues M1–A24. Phosphoserine is present on S83. The residue at position 145 (T145) is a Phosphothreonine. Residues E147–K215 are a coiled coil. Residues S190 to Q207 show a composition bias toward basic and acidic residues. Positions S190–V218 are disordered. Residues L225–T318 are binds to GNAI2 and GNAI3. 2 EF-hand domains span residues P237–K272 and E289–G324. Residues D250, N252, D254, E261, D302, N304, D306, and E313 each coordinate Ca(2+). The GBA signature appears at N300 to W330. A coiled-coil region spans residues A355 to N422. The disordered stretch occupies residues L382–L474. The residue at position 383 (S383) is a Phosphoserine. The span at D448–P460 shows a compositional bias: basic and acidic residues. At S471 the chain carries Phosphoserine.

This sequence belongs to the nucleobindin family. Interacts (via GBA motif) with guanine nucleotide-binding protein G(i) alpha subunits GNAI1, GNAI2 and GNAI3 with higher affinity for GNAI1 and GNAI3 than for GNAI2. Preferentially interacts with inactive rather than active GNAI3. Interaction with GNAI3 is inhibited when NUCB1 binds calcium, probably due to a conformational change which renders the GBA motif inaccessible. As to expression, expressed in bone where it is detected in the soft tissue in the center of the osteon and in the osteocyte lacuna (at protein level).

It is found in the golgi apparatus. It localises to the cis-Golgi network membrane. The protein localises to the cytoplasm. Its subcellular location is the secreted. In terms of biological role, major calcium-binding protein of the Golgi which may have a role in calcium homeostasis. Acts as a non-receptor guanine nucleotide exchange factor which binds to and activates alpha subunits of guanine nucleotide-binding proteins (G proteins). This Bos taurus (Bovine) protein is Nucleobindin-1 (NUCB1).